The following is a 1505-amino-acid chain: Probable serine/threonine-protein kinase DDB_G0280133 (1505 aa).

3 consecutive PAS domains span residues 2-72 (NTHN…FETG), 108-178 (RMFI…YHGG), and 215-284 (DMFK…TDSH). Disordered regions lie at residues 282-348 (DSHD…FNHS) and 398-533 (RVYG…ESSY). 2 stretches are compositionally biased toward low complexity: residues 289–314 (QQQQ…TTST) and 328–344 (SSPP…TPTT). 2 stretches are compositionally biased toward basic and acidic residues: residues 398–407 (RVYGKDKDKN) and 415–430 (ENKD…ESKE). A compositionally biased stretch (basic residues) spans 431 to 443 (HRHSKEKKKRKKD). Over residues 448–468 (NNNNNNNNNNNNNNEQTSDSS) the composition is skewed to low complexity. Over residues 479–489 (SKKKRSSKKKS) the composition is skewed to basic residues. Positions 515–532 (SSNSSSNSSHSNAPHESS) are enriched in low complexity. Residues 542-805 (YTLGKTLGRG…IMNVLNHPWL (264 aa)) enclose the Protein kinase domain. ATP contacts are provided by residues 548-556 (LGRGNYGVV) and Lys-571. Residue Asp-684 is the Proton acceptor of the active site. Residues 855 to 960 (NILNNNNNNN…NNTNSIINNN (106 aa)) are compositionally biased toward low complexity. Disordered regions lie at residues 855–1048 (NILN…SHQQ), 1072–1091 (QPNQ…QLQQ), and 1181–1358 (QQQQ…DEEN). Positions 903-939 (NNNNNINNNINNNNNVNNNVNNNKNNNNNNNNNSNNN) form a coiled coil. Residues 961–974 (LYNQSLSPQNNNIY) are compositionally biased toward polar residues. 2 stretches are compositionally biased toward low complexity: residues 975–1013 (QHSP…QQQH) and 1022–1048 (QQHQ…SHQQ). Positions 1072-1082 (QPNQQVSFDTN) are enriched in polar residues. The stretch at 1125 to 1189 (IQQIQQLQQQ…QQQQQQQQND (65 aa)) forms a coiled coil. The span at 1202–1271 (SKRDNSYNKR…NSRDNNRYNN (70 aa)) shows a compositional bias: basic and acidic residues. The span at 1272-1282 (RDNNNNNNSNN) shows a compositional bias: low complexity. Basic and acidic residues-rich tracts occupy residues 1283 to 1301 (NRER…DYGK) and 1313 to 1326 (NKDK…KPDF). Residues 1331 to 1347 (SLKNDSSSNYGTISSGR) show a composition bias toward polar residues. The FHA domain occupies 1399-1463 (FLFGRNRDIA…NGTFLKGEKI (65 aa)).

It belongs to the protein kinase superfamily. CAMK Ser/Thr protein kinase family. SNF1 subfamily.

The enzyme catalyses L-seryl-[protein] + ATP = O-phospho-L-seryl-[protein] + ADP + H(+). The catalysed reaction is L-threonyl-[protein] + ATP = O-phospho-L-threonyl-[protein] + ADP + H(+). In Dictyostelium discoideum (Social amoeba), this protein is Probable serine/threonine-protein kinase DDB_G0280133.